The primary structure comprises 365 residues: uncharacterized protein (365 aa).

A run of 6 helical transmembrane segments spans residues 3–23 (MDTS…LYSI), 60–80 (IGII…LNII), 100–120 (VFLF…LIAI), 141–161 (SGIL…GDEF), 171–191 (AIAS…IPLL), and 280–300 (TALF…LALF).

This sequence to S.solfataricus C04034.

Its subcellular location is the cell membrane. This is an uncharacterized protein from Methanocaldococcus jannaschii (strain ATCC 43067 / DSM 2661 / JAL-1 / JCM 10045 / NBRC 100440) (Methanococcus jannaschii).